The sequence spans 194 residues: Fibroblast growth factor 7 (194 aa).

The first 31 residues, 1–31, serve as a signal peptide directing secretion; sequence MHKWILTWILPTLLYRSCFHIICLVGTISLA. N-linked (GlcNAc...) asparagine glycosylation occurs at Asn-45.

It belongs to the heparin-binding growth factors family. Interacts with FGFBP1. Interacts with FGFR2. Affinity between fibroblast growth factors (FGFs) and their receptors is increased by heparan sulfate glycosaminoglycans that function as coreceptors. As to expression, epithelial cell.

The protein localises to the secreted. Plays an important role in the regulation of embryonic development, cell proliferation and cell differentiation. Required for normal branching morphogenesis. Growth factor active on keratinocytes. Possible major paracrine effector of normal epithelial cell proliferation. This Homo sapiens (Human) protein is Fibroblast growth factor 7 (FGF7).